A 100-amino-acid chain; its full sequence is Toxin ParE3 (100 aa).

Belongs to the RelE toxin family.

Functionally, toxic component of a type II toxin-antitoxin (TA) system. Its toxic effect is neutralized by coexpression with cognate antitoxin ParD3 but no other ParD or RelB antitoxin. In Caulobacter vibrioides (strain ATCC 19089 / CIP 103742 / CB 15) (Caulobacter crescentus), this protein is Toxin ParE3 (parE3).